The chain runs to 122 residues: Large ribosomal subunit protein uL14 (122 aa).

This sequence belongs to the universal ribosomal protein uL14 family. As to quaternary structure, part of the 50S ribosomal subunit. Forms a cluster with proteins L3 and L19. In the 70S ribosome, L14 and L19 interact and together make contacts with the 16S rRNA in bridges B5 and B8.

Functionally, binds to 23S rRNA. Forms part of two intersubunit bridges in the 70S ribosome. The chain is Large ribosomal subunit protein uL14 from Streptococcus thermophilus (strain CNRZ 1066).